A 307-amino-acid chain; its full sequence is tRNA N6-adenosine threonylcarbamoyltransferase (307 aa).

Positions 108 and 112 each coordinate Fe cation. Residues 131–135 (IVSGG), D164, G177, D181, and N266 contribute to the substrate site. Residue D290 coordinates Fe cation.

The protein belongs to the KAE1 / TsaD family. Fe(2+) serves as cofactor.

It localises to the cytoplasm. It catalyses the reaction L-threonylcarbamoyladenylate + adenosine(37) in tRNA = N(6)-L-threonylcarbamoyladenosine(37) in tRNA + AMP + H(+). Required for the formation of a threonylcarbamoyl group on adenosine at position 37 (t(6)A37) in tRNAs that read codons beginning with adenine. Is involved in the transfer of the threonylcarbamoyl moiety of threonylcarbamoyl-AMP (TC-AMP) to the N6 group of A37, together with TsaE and TsaB. TsaD likely plays a direct catalytic role in this reaction. The polypeptide is tRNA N6-adenosine threonylcarbamoyltransferase (Mycoplasmopsis synoviae (strain 53) (Mycoplasma synoviae)).